Here is a 471-residue protein sequence, read N- to C-terminus: MEGQVVGRVFRLFQRRLLQLRAGPPQDNSGEALKEPERAQEHSLPNFAGGQHFFEYLLVVSLKKKRSEDDYEPIITYQFPKRENLLRGQQEEEERLLKAIPLFCFPDGNEWASLTEYPRETFSFVLTNVDGSRKIGYCRRLLPAGPGPRLPKVYCIISCIGCFGLFSKILDEVEKRHQISMAVIYPFMQGLREAAFPAPGKTVTLKSFIPDSGTEFISLTRPLDSHLEHVDFSSLLHCLSFEQILQIFASAVLERKIIFLAEGLSTLSQCIHAAAALLYPFSWAHTYIPVVPESLLATVCCPTPFMVGVQMRFQQEVMDSPMEEVLLVNLCEGTFLMSVGDEKDILPPKLQDDILDSLGQGINELKTAEQINEHVSGPFVQFFVKIVGHYASYIKREANGQGHFQERSFCKALTSKTNRRFVKKFVKTQLFSLFIQEAEKSKNPPAGYFQQKILEYEEQKKQKKPREKTVK.

A uDENN domain is found at 55 to 204 (EYLLVVSLKK…AFPAPGKTVT (150 aa)). Residues 226-359 (HLEHVDFSSL…LQDDILDSLG (134 aa)) form the cDENN domain. Residues 361–445 (GINELKTAEQ…QEAEKSKNPP (85 aa)) enclose the dDENN domain.

In terms of tissue distribution, in bronchial mucosa, mainly expressed in ciliated and basal epithelial cells and weakly in alveolar cells (at protein level). Tends to be down-regulated in lung cancers, immortalized bronchial epithelial cell lines and precancerous lesions.

Its subcellular location is the cytoplasm. Functionally, guanine nucleotide exchange factor (GEF) which may activate RAB9A and RAB9B. Promotes the exchange of GDP to GTP, converting inactive GDP-bound Rab proteins into their active GTP-bound form. The sequence is that of DENN domain-containing protein 2D (DENND2D) from Homo sapiens (Human).